Consider the following 256-residue polypeptide: uncharacterized protein (256 aa).

This is an uncharacterized protein from Bacillus subtilis (strain 168).